A 133-amino-acid polypeptide reads, in one-letter code: Serine/threonine-protein kinase RsbT (133 aa).

The enzyme catalyses L-seryl-[protein] + ATP = O-phospho-L-seryl-[protein] + ADP + H(+). It carries out the reaction L-threonyl-[protein] + ATP = O-phospho-L-threonyl-[protein] + ADP + H(+). Functionally, provides the crucial link between the upstream module (communication of environmental stress) and the downstream module (integration of the environmental signals with signals of energy stress) that compose the signal transduction pathway controlling the sigma-B factor. Phosphorylates and inactivates its specific antagonist protein RsbS thanks to its serine kinase activity. Upon phosphorylation of RsbS, RsbT is released to stimulate RsbU, a PP2C phosphatase, thereby initiating the signaling cascade that ultimately activates sigma-B. The activity of the RsbU phosphatase may be stimulated by a long-lived interaction with RsbT and the serine kinase function of RsbT is not required to directly modify RsbU. Also phosphorylates RsbR thanks to its threonine kinase activity, preventing it to phosphorylate RsbT. The chain is Serine/threonine-protein kinase RsbT (rsbT) from Bacillus subtilis (strain 168).